The following is a 309-amino-acid chain: 5-formyl-3-hydroxy-2-methylpyridine 4-carboxylate 5-dehydrogenase (309 aa).

Residues 12 to 13 (TM), aspartate 32, 87 to 89 (VPE), and lysine 94 contribute to the NAD(+) site.

Belongs to the 3-hydroxyacyl-CoA dehydrogenase family. Homodimer.

It carries out the reaction 5-formyl-3-hydroxy-2-methylpyridine-4-carboxylate + NAD(+) + H2O = 5-hydroxy-6-methylpyridine-3,4-dicarboxylate + NADH + 2 H(+). The enzyme catalyses 5-formyl-3-hydroxy-2-methylpyridine-4-carboxylate + NADH + H(+) = 4-pyridoxate + NAD(+). The protein operates within cofactor degradation; B6 vitamer degradation. In terms of biological role, involved in the degradation of pyridoxine (vitamin B(6)). Catalyzes the oxidation of 5-formyl-3-hydroxy-2-methylpyridine-4-carboxylate (FHMPC) by NAD(+) to 5-hydroxy-6-methylpyridine-3,4-dicarboxylate (HMPDC). Can also catalyze the reduction of FHMPC by NADH to 4-pyridoxic acid. The sequence is that of 5-formyl-3-hydroxy-2-methylpyridine 4-carboxylate 5-dehydrogenase from Mesorhizobium japonicum (strain LMG 29417 / CECT 9101 / MAFF 303099) (Mesorhizobium loti (strain MAFF 303099)).